Here is a 284-residue protein sequence, read N- to C-terminus: 4-diphosphocytidyl-2-C-methyl-D-erythritol kinase (284 aa).

Lys10 is an active-site residue. 92-102 (PYGAGLGSGSS) provides a ligand contact to ATP. The active site involves Asp134.

The protein belongs to the GHMP kinase family. IspE subfamily.

It carries out the reaction 4-CDP-2-C-methyl-D-erythritol + ATP = 4-CDP-2-C-methyl-D-erythritol 2-phosphate + ADP + H(+). It functions in the pathway isoprenoid biosynthesis; isopentenyl diphosphate biosynthesis via DXP pathway; isopentenyl diphosphate from 1-deoxy-D-xylulose 5-phosphate: step 3/6. Functionally, catalyzes the phosphorylation of the position 2 hydroxy group of 4-diphosphocytidyl-2C-methyl-D-erythritol. The polypeptide is 4-diphosphocytidyl-2-C-methyl-D-erythritol kinase (Salinibacter ruber (strain DSM 13855 / M31)).